A 906-amino-acid chain; its full sequence is MCRIAGALRTLLPLLAALLQASVEASGEIALCKTGFPEDVYSAVLSKDVHEGQPLLNVKFSNCNGKRKVQYESSEPADFKVDEDGMVYAVRSFPLSSEHAKFLIYAQDKETQEKWQVAVKLSLKPTLTEESVKESAEVEEIVFPRQFSKHSGHLQRQKRDWVIPPINLPENSRGPFPQELVRIRSDRDKNLSLRYSVTGPGADQPPTGIFIINPISGQLSVTKPLDREQIARFHLRAHAVDINGNQVENPIDIVINVIDMNDNRPEFLHQVWNGTVPEGSKPGTYVMTVTAIDADDPNALNGMLRYRIVSQAPSTPSPNMFTINNETGDIITVAAGLDREKVQQYTLIIQATDMEGNPTYGLSNTATAVITVTDVNDNPPEFTAMTFYGEVPENRVDIIVANLTVTDKDQPHTPAWNAVYRISGGDPTGRFAIQTDPNSNDGLVTVVKPIDFETNRMFVLTVAAENQVPLAKGIQHPPQSTATVSVTVIDVNENPYFAPNPKIIRQEEGLHAGTMLTTFTAQDPDRYMQQNIRYTKLSDPANWLKIDPVNGQITTIAVLDRESPNVKNNIYNATFLASDNGIPPMSGTGTLQIYLLDINDNAPQVLPQEAETCETPDPNSINITALDYDIDPNAGPFAFDLPLSPVTIKRNWTITRLNGDFAQLNLKIKFLEAGIYEVPIIITDSGNPPKSNISILRVKVCQCDSNGDCTDVDRIVGAGLGTGAIIAILLCIIILLILVLMFVVWMKRRDKERQAKQLLIDPEDDVRDNILKYDEEGGGEEDQDYDLSQLQQPDTVEPDAIKPVGIRRMDERPIHAEPQYPVRSAAPHPGDIGDFINEGLKAADNDPTAPPYDSLLVFDYEGSGSTAGSLSSLNSSSSGGEQDYDYLNDWGPRFKKLADMYGGGDD.

An N-terminal signal peptide occupies residues 1 to 25; that stretch reads MCRIAGALRTLLPLLAALLQASVEA. Positions 26 to 159 are excised as a propeptide; that stretch reads SGEIALCKTG…HSGHLQRQKR (134 aa). Phosphoserine; by FAM20C occurs at positions 96 and 135. Cadherin domains lie at 160 to 267, 268 to 382, 383 to 497, 498 to 603, and 604 to 714; these read DWVI…RPEF, LHQV…PPEF, TAMT…NPYF, APNP…DNAP, and QVLP…DVDR. The Extracellular segment spans residues 160–724; the sequence is DWVIPPINLP…IVGAGLGTGA (565 aa). Residue Glu-170 coordinates Ca(2+). An N-linked (GlcNAc...) asparagine glycan is attached at Asn-190. Residues Asp-226, Glu-228, Asp-259, Met-260, Asn-261, Asp-262, and Asn-263 each coordinate Ca(2+). N-linked (GlcNAc...) asparagine glycosylation occurs at Asn-273. Residues Asp-293, Asp-295, and Asn-301 each contribute to the Ca(2+) site. A glycan (N-linked (GlcNAc...) asparagine) is linked at Asn-325. Ca(2+) is bound at residue Asp-353. 4 N-linked (GlcNAc...) asparagine glycosylation sites follow: Asn-402, Asn-572, Asn-651, and Asn-692. Residues 725–745 traverse the membrane as a helical segment; that stretch reads IIAILLCIIILLILVLMFVVW. Over 746–906 the chain is Cytoplasmic; that stretch reads MKRRDKERQA…LADMYGGGDD (161 aa). Residues 863–880 are compositionally biased toward low complexity; the sequence is SGSTAGSLSSLNSSSSGG. A disordered region spans residues 863–884; it reads SGSTAGSLSSLNSSSSGGEQDY.

In terms of assembly, homodimer (via extracellular region). Can also form heterodimers with other cadherins (via extracellular region). Dimerization occurs in trans, i.e. with a cadherin chain from another cell. Interacts with CDCP1. Interacts with PCDH8; this complex may also include TAOK2. The interaction with PCDH8 may lead to internalization through TAOK2/p38 MAPK pathway. Identified in a complex containing FGFR4, NCAM1, CDH2, PLCG1, FRS2, SRC, SHC1, GAP43 and CTTN. May interact with OBSCN (via protein kinase domain 2). Interacts with FBXO45. Cleaved by MMP24. Ectodomain cleavage leads to the generation of a soluble 90 kDa N-terminal soluble fragment and a 45 kDa membrane-bound C-terminal fragment 1 (CTF1), which is further cleaved by gamma-secretase into a 35 kDa. Cleavage in neural stem cells by MMP24 affects CDH2-mediated anchorage of neural stem cells to ependymocytes in the adult subependymal zone, leading to modulate neural stem cell quiescence. Post-translationally, may be phosphorylated by OBSCN.

It localises to the cell membrane. It is found in the sarcolemma. Its subcellular location is the cell junction. The protein resides in the cell surface. The protein localises to the desmosome. It localises to the adherens junction. In terms of biological role, calcium-dependent cell adhesion protein; preferentially mediates homotypic cell-cell adhesion by dimerization with a CDH2 chain from another cell. Cadherins may thus contribute to the sorting of heterogeneous cell types. Acts as a regulator of neural stem cells quiescence by mediating anchorage of neural stem cells to ependymocytes in the adult subependymal zone: upon cleavage by MMP24, CDH2-mediated anchorage is affected, leading to modulate neural stem cell quiescence. Plays a role in cell-to-cell junction formation between pancreatic beta cells and neural crest stem (NCS) cells, promoting the formation of processes by NCS cells. Required for proper neurite branching. Required for pre- and postsynaptic organization. CDH2 may be involved in neuronal recognition mechanism. In hippocampal neurons, may regulate dendritic spine density. In Homo sapiens (Human), this protein is Cadherin-2 (CDH2).